Consider the following 327-residue polypeptide: Tetraacyldisaccharide 4'-kinase (327 aa).

58–65 (TVGGTGKT) is a binding site for ATP.

The protein belongs to the LpxK family.

The enzyme catalyses a lipid A disaccharide + ATP = a lipid IVA + ADP + H(+). The protein operates within glycolipid biosynthesis; lipid IV(A) biosynthesis; lipid IV(A) from (3R)-3-hydroxytetradecanoyl-[acyl-carrier-protein] and UDP-N-acetyl-alpha-D-glucosamine: step 6/6. Functionally, transfers the gamma-phosphate of ATP to the 4'-position of a tetraacyldisaccharide 1-phosphate intermediate (termed DS-1-P) to form tetraacyldisaccharide 1,4'-bis-phosphate (lipid IVA). This chain is Tetraacyldisaccharide 4'-kinase, found in Alcanivorax borkumensis (strain ATCC 700651 / DSM 11573 / NCIMB 13689 / SK2).